A 201-amino-acid chain; its full sequence is Holliday junction branch migration complex subunit RuvA (201 aa).

The tract at residues 1-64 (MYEYIKGKYI…QDFIGLYGFL (64 aa)) is domain I. The segment at 65-143 (TKDELEMFNK…STDISKGNSE (79 aa)) is domain II. A flexible linker region spans residues 144–154 (INNLDVDYDEH). Residues 154 to 201 (HSKKLEEVRFALNSLGYSEKETDRAINNVDKSEGIENIIKSCLRFLMN) are domain III.

It belongs to the RuvA family. In terms of assembly, homotetramer. Forms an RuvA(8)-RuvB(12)-Holliday junction (HJ) complex. HJ DNA is sandwiched between 2 RuvA tetramers; dsDNA enters through RuvA and exits via RuvB. An RuvB hexamer assembles on each DNA strand where it exits the tetramer. Each RuvB hexamer is contacted by two RuvA subunits (via domain III) on 2 adjacent RuvB subunits; this complex drives branch migration. In the full resolvosome a probable DNA-RuvA(4)-RuvB(12)-RuvC(2) complex forms which resolves the HJ.

It localises to the cytoplasm. Functionally, the RuvA-RuvB-RuvC complex processes Holliday junction (HJ) DNA during genetic recombination and DNA repair, while the RuvA-RuvB complex plays an important role in the rescue of blocked DNA replication forks via replication fork reversal (RFR). RuvA specifically binds to HJ cruciform DNA, conferring on it an open structure. The RuvB hexamer acts as an ATP-dependent pump, pulling dsDNA into and through the RuvAB complex. HJ branch migration allows RuvC to scan DNA until it finds its consensus sequence, where it cleaves and resolves the cruciform DNA. This is Holliday junction branch migration complex subunit RuvA from Clostridium acetobutylicum (strain ATCC 824 / DSM 792 / JCM 1419 / IAM 19013 / LMG 5710 / NBRC 13948 / NRRL B-527 / VKM B-1787 / 2291 / W).